We begin with the raw amino-acid sequence, 153 residues long: 3-hydroxyacyl-[acyl-carrier-protein] dehydratase FabZ (153 aa).

Histidine 54 is an active-site residue.

The protein belongs to the thioester dehydratase family. FabZ subfamily.

The protein resides in the cytoplasm. It catalyses the reaction a (3R)-hydroxyacyl-[ACP] = a (2E)-enoyl-[ACP] + H2O. In terms of biological role, involved in unsaturated fatty acids biosynthesis. Catalyzes the dehydration of short chain beta-hydroxyacyl-ACPs and long chain saturated and unsaturated beta-hydroxyacyl-ACPs. The sequence is that of 3-hydroxyacyl-[acyl-carrier-protein] dehydratase FabZ from Chlamydia muridarum (strain MoPn / Nigg).